A 265-amino-acid chain; its full sequence is MCMVIFAPLFAIFAFATCGGYSGGLRLSVDCVNKTESNLSIDIAFAYPFRLHQVTFEVPTCEGKERQKLALVGDSSSSAEFFVTVAVFAFLYSLAATVVYIFFQNKYRENNRGPLIDFIVTVVFSFLWLVGSSAWAKGLSDVKVATDPKEVLLLMSACKQPSNKCMAVHSPVMSSLNTSVVFGFLNFILWAGNIWFVFKETGWHSSGQRYLSDPMEKHSSSYNQGGYNQDSYGSSGGYSQQASLGPTSDEFGQQPSGPTSFNNQI.

Over 1–4 (MCMV) the chain is Cytoplasmic. Residues 1-202 (MCMVIFAPLF…NIWFVFKETG (202 aa)) form the MARVEL domain. A helical membrane pass occupies residues 5–25 (IFAPLFAIFAFATCGGYSGGL). The Vesicular segment spans residues 26–81 (RLSVDCVNKTESNLSIDIAFAYPFRLHQVTFEVPTCEGKERQKLALVGDSSSSAEF). 2 N-linked (GlcNAc...) asparagine glycosylation sites follow: Asn-33 and Asn-38. The chain crosses the membrane as a helical span at residues 82–102 (FVTVAVFAFLYSLAATVVYIF). Over 103–114 (FQNKYRENNRGP) the chain is Cytoplasmic. A helical membrane pass occupies residues 115–135 (LIDFIVTVVFSFLWLVGSSAW). The Vesicular segment spans residues 136–177 (AKGLSDVKVATDPKEVLLLMSACKQPSNKCMAVHSPVMSSLN). An N-linked (GlcNAc...) asparagine glycan is attached at Asn-177. Residues 178 to 198 (TSVVFGFLNFILWAGNIWFVF) traverse the membrane as a helical segment. Residues 199–265 (KETGWHSSGQ…SGPTSFNNQI (67 aa)) are Cytoplasmic-facing. Residues 210-214 (YLSDP) form repeat 1. The 5 X approximate repeats stretch occupies residues 210–242 (YLSDPMEKHSSSYNQGGYNQDSYGSSGGYSQQA). 2 positions are modified to phosphoserine: Ser-212 and Ser-220. A disordered region spans residues 221-265 (SYNQGGYNQDSYGSSGGYSQQASLGPTSDEFGQQPSGPTSFNNQI). 4 consecutive repeat copies span residues 222–226 (YNQGG), 227–231 (YNQDS), 232–236 (YGSSG), and 238–242 (YSQQA). Residues 224–243 (QGGYNQDSYGSSGGYSQQAS) are compositionally biased toward low complexity. The span at 244-265 (LGPTSDEFGQQPSGPTSFNNQI) shows a compositional bias: polar residues.

Belongs to the synaptophysin/synaptobrevin family. Central nervous system.

The protein localises to the cytoplasmic vesicle. The protein resides in the secretory vesicle. It localises to the synaptic vesicle membrane. Its subcellular location is the synapse. It is found in the synaptosome. Its function is as follows. Intrinsic membrane protein of small synaptic vesicles. Probable vesicular channel protein. In Rattus norvegicus (Rat), this protein is Synaptoporin (Synpr).